Here is a 686-residue protein sequence, read N- to C-terminus: Asparagine-rich protein (686 aa).

Positions 1-18 (MKGTSALLLIGFFHATIS) are cleaved as a signal peptide. Disordered stretches follow at residues 34-73 (KRGNLNTGGQITSNSAILGDVNAGSKLSEPPKRRNTDKTA), 125-148 (SLTSDTKTTTRTSQTSSTRASSSI), and 201-236 (ITRQKSENTQGNSIVRNGGTNSLNIPSSTRRSQPPN). Positions 37 to 49 (NLNTGGQITSNSA) are enriched in polar residues. The segment covering 62–73 (EPPKRRNTDKTA) has biased composition (basic and acidic residues).

As to expression, prismatic layer of shell (at protein level). Expressed primarily in the mantle with highest level in the mantle edge and lower level in the mantle pallium.

The protein localises to the secreted. The protein is Asparagine-rich protein of Margaritifera margaritifera (Freshwater pearl mussel).